Reading from the N-terminus, the 84-residue chain is Protein SlyX homolog (84 aa).

It belongs to the SlyX family.

This chain is Protein SlyX homolog, found in Mannheimia succiniciproducens (strain KCTC 0769BP / MBEL55E).